Consider the following 245-residue polypeptide: MIIPALDLIEGQVVRLYQGDYGQVTEYKVDPAEQFNLYHQAGANWLHLVDLTGAKDTTARQLDLIAKLLASTPANIQIGGGVRTEQDVIDLLEAGAQRVVVGSTAVKQPELVKGWMEKYGAEKIVLALDINIDQDGTRKVAISGWQEDSGVTIEALINDYLTVGLQHVLCTDISRDGTLEGSNVELYVDLCKQYPQVQFQSSGGIGSLTDIEALKGSGVAGVIVGRALLDGKFTAEEAFACWQSE.

The active-site Proton acceptor is Asp7. The Proton donor role is filled by Asp129.

It belongs to the HisA/HisF family.

It localises to the cytoplasm. The enzyme catalyses 1-(5-phospho-beta-D-ribosyl)-5-[(5-phospho-beta-D-ribosylamino)methylideneamino]imidazole-4-carboxamide = 5-[(5-phospho-1-deoxy-D-ribulos-1-ylimino)methylamino]-1-(5-phospho-beta-D-ribosyl)imidazole-4-carboxamide. It participates in amino-acid biosynthesis; L-histidine biosynthesis; L-histidine from 5-phospho-alpha-D-ribose 1-diphosphate: step 4/9. The protein is 1-(5-phosphoribosyl)-5-[(5-phosphoribosylamino)methylideneamino] imidazole-4-carboxamide isomerase of Vibrio vulnificus (strain CMCP6).